The sequence spans 254 residues: 3-deoxy-manno-octulosonate cytidylyltransferase (254 aa).

It belongs to the KdsB family.

It localises to the cytoplasm. It carries out the reaction 3-deoxy-alpha-D-manno-oct-2-ulosonate + CTP = CMP-3-deoxy-beta-D-manno-octulosonate + diphosphate. Its pathway is nucleotide-sugar biosynthesis; CMP-3-deoxy-D-manno-octulosonate biosynthesis; CMP-3-deoxy-D-manno-octulosonate from 3-deoxy-D-manno-octulosonate and CTP: step 1/1. It participates in bacterial outer membrane biogenesis; lipopolysaccharide biosynthesis. Its function is as follows. Activates KDO (a required 8-carbon sugar) for incorporation into bacterial lipopolysaccharide in Gram-negative bacteria. The protein is 3-deoxy-manno-octulosonate cytidylyltransferase of Porphyromonas gingivalis (strain ATCC BAA-308 / W83).